Consider the following 122-residue polypeptide: Large ribosomal subunit protein uL14 (122 aa).

This sequence belongs to the universal ribosomal protein uL14 family. Part of the 50S ribosomal subunit. Forms a cluster with proteins L3 and L19. In the 70S ribosome, L14 and L19 interact and together make contacts with the 16S rRNA in bridges B5 and B8.

Its function is as follows. Binds to 23S rRNA. Forms part of two intersubunit bridges in the 70S ribosome. This Streptomyces griseus subsp. griseus (strain JCM 4626 / CBS 651.72 / NBRC 13350 / KCC S-0626 / ISP 5235) protein is Large ribosomal subunit protein uL14.